The primary structure comprises 246 residues: MRSGVIAQKLGMTRIYNDAGEHVPVTVLRLENCQVVAQRTVEKNGYTAVQLGVGFAKVKNTSQALRGHFAKASVEPKAKIAEFRVSPDNLLDIGTEITAEHFVPGQRVDVTGTTIGKGFAGVMKRHNFGGHRASHGNSITHRAHGSTGQCQDPGKVFKGKKMAGHMGQVRVTTQNIEVVSTDVERGLILVRGAVSGSKGAWILVRDAIKKPLPDNAPKPAGIRQLAKEKTEMVAPVTETSEVEGAE.

Residue Gln-151 is modified to N5-methylglutamine.

It belongs to the universal ribosomal protein uL3 family. In terms of assembly, part of the 50S ribosomal subunit. Forms a cluster with proteins L14 and L19. Post-translationally, methylated by PrmB.

In terms of biological role, one of the primary rRNA binding proteins, it binds directly near the 3'-end of the 23S rRNA, where it nucleates assembly of the 50S subunit. The sequence is that of Large ribosomal subunit protein uL3 from Bartonella henselae (strain ATCC 49882 / DSM 28221 / CCUG 30454 / Houston 1) (Rochalimaea henselae).